We begin with the raw amino-acid sequence, 297 residues long: Phospholipid scramblase 2 (297 aa).

The segment at 1 to 72 is proline-rich domain (PRD); it reads MRSWNSLFCL…NQPGRPEGVP (72 aa). Residues 1 to 276 lie on the Cytoplasmic side of the membrane; the sequence is MRSWNSLFCL…IQFPRDLDVK (276 aa). Thr-149 carries the phosphothreonine; by PKC modification. S-palmitoyl cysteine attachment occurs at residues Cys-172, Cys-173, Cys-174, Cys-176, and Cys-177. Residues 277–293 traverse the membrane as a helical segment; that stretch reads MKAVMIGACFLIDYMFF. The Extracellular segment spans residues 294–297; that stretch reads ERTR.

This sequence belongs to the phospholipid scramblase family. The cofactor is Ca(2+). Expression of isoform 1 seems restricted to testis.

Its subcellular location is the membrane. The protein resides in the nucleus. The catalysed reaction is a 1,2-diacyl-sn-glycero-3-phosphocholine(in) = a 1,2-diacyl-sn-glycero-3-phosphocholine(out). Functionally, may catalyze calcium-induced ATP-independent rapid bidirectional and non-specific movement of phospholipids (lipid scrambling or lipid flip-flop) between the inner and outer leaflet of the plasma membrane. Its function is as follows. Has no phospholipid scramblase activity, due to the lack of a N-terminal proline-rich domain. The sequence is that of Phospholipid scramblase 2 from Homo sapiens (Human).